We begin with the raw amino-acid sequence, 1045 residues long: Putative sodium-coupled neutral amino acid transporter 10 (1045 aa).

Transmembrane regions (helical) follow at residues 8-28 (LIMN…PFCF), 33-53 (ILLG…SCMF), 85-105 (SMIG…GDLG), 117-137 (VSEG…VLPL), 150-170 (FSAM…LSSF), 226-246 (IFAL…FFGY), 269-289 (MIRV…ILPC), 320-340 (ILTL…PNVE), 342-362 (ILGL…PALI), and 375-395 (FILG…LTVT). Composition is skewed to basic and acidic residues over residues 412–453 (KEEK…EEQI), 460–479 (PQKE…RPDQ), and 503–546 (VDEK…DQAE). Disordered regions lie at residues 412-584 (KEEK…EQPP) and 606-658 (EIAE…AEAG). The span at 564–573 (NDPNKQQLVN) shows a compositional bias: polar residues. The segment covering 627-658 (PIKDEKNEQIPGDPGKESHVEPKAEDNQAEAG) has biased composition (basic and acidic residues).

The protein belongs to the amino acid/polyamine transporter 2 family.

The protein resides in the membrane. Functionally, putative sodium-dependent amino acid/proton antiporter. The protein is Putative sodium-coupled neutral amino acid transporter 10 (slc38a10) of Xenopus laevis (African clawed frog).